Consider the following 212-residue polypeptide: 2-hydroxychromene-2-carboxylate isomerase (212 aa).

Serine 24 acts as the Nucleophile in catalysis. A glutathione-binding site is contributed by serine 24. Residues lysine 56, 66–67 (NR), and tyrosine 97 contribute to the substrate site. Glutathione is bound by residues valine 181 and 192–195 (WGND).

It belongs to the GST superfamily. NadH family. Glutathione is required as a cofactor.

The enzyme catalyses 2-hydroxychromene-2-carboxylate = (3E)-4-(2-hydroxyphenyl)-2-oxobut-3-enoate. The protein operates within aromatic compound metabolism; naphthalene degradation. Functionally, involved in the naphthalene catabolic pathway. Catalyzes the reversible glutathione-dependent isomerization of 2-hydroxychromene-2-carboxylate (HCCA) to trans-O-hydroxybenzylidenepyruvate (THBPA). The polypeptide is 2-hydroxychromene-2-carboxylate isomerase (doxJ) (Pseudomonas sp. (strain C18)).